The sequence spans 411 residues: Glutamyl-tRNA reductase (411 aa).

Substrate-binding positions include 48 to 51, S106, 111 to 113, and Q117; these read TCNR and EDQ. C49 functions as the Nucleophile in the catalytic mechanism. 186-191 serves as a coordination point for NADP(+); sequence GAGDMG.

This sequence belongs to the glutamyl-tRNA reductase family. In terms of assembly, homodimer.

The enzyme catalyses (S)-4-amino-5-oxopentanoate + tRNA(Glu) + NADP(+) = L-glutamyl-tRNA(Glu) + NADPH + H(+). Its pathway is porphyrin-containing compound metabolism; protoporphyrin-IX biosynthesis; 5-aminolevulinate from L-glutamyl-tRNA(Glu): step 1/2. Catalyzes the NADPH-dependent reduction of glutamyl-tRNA(Glu) to glutamate 1-semialdehyde (GSA). The chain is Glutamyl-tRNA reductase from Clostridium novyi (strain NT).